Here is a 557-residue protein sequence, read N- to C-terminus: Mercuric reductase (557 aa).

Residues 1-65 enclose the HMA domain; sequence MILLSIEGMT…AIEALGYIAK (65 aa). A metal cation is bound by residues Cys-11 and Cys-14. FAD is bound by residues Ala-106 and Ala-126. A disulfide bond links Cys-133 and Cys-138. 4 residues coordinate FAD: Lys-142, Ala-207, Asp-399, and Val-407. Hg(2+) is bound by residues Cys-554 and Cys-555.

It belongs to the class-I pyridine nucleotide-disulfide oxidoreductase family. As to quaternary structure, homodimer. The cofactor is FAD.

The enzyme catalyses Hg + NADP(+) + H(+) = Hg(2+) + NADPH. Its function is as follows. Resistance to Hg(2+) in bacteria appears to be governed by a specialized system which includes mercuric reductase. MerA protein is responsible for volatilizing mercury as Hg(0). The chain is Mercuric reductase (merA) from Shewanella putrefaciens (Pseudomonas putrefaciens).